We begin with the raw amino-acid sequence, 202 residues long: Protein FAR-RED ELONGATED HYPOCOTYL 1 (202 aa).

Position 39 is a phosphoserine (Ser39). The Nuclear localization sequence (NLS) signature appears at 40-43 (KKRK). Positions 54–57 (LLPL) match the Nuclear export sequence (NES) motif. Phosphothreonine is present on Thr61.

It belongs to the FHY1 protein family. As to quaternary structure, homodimer and heterodimer with FHL. Interacts with underphosphorylated PHYA, especially upon far-red (FR) light illumination. Binds to LAF1 and HFR1. Forms PHYA/FHY1/HFR1 complex in darkness but dissociates from PHYA and HFR1 in response to continuous FR light (FRc). Inactivated by rapid reversible PHYA-mediated phosphorylation at Ser-39 and Thr-61 in red light (R), thus inhibiting PHYA signaling in a negative feedback loop; this ensures the seedling deetiolation process in response to a R-enriched light condition. Subsequent exposure to far-red light (FR) after the R conditions leads to dephosphorylation. The phosphorylated form is cytoplasmic only and unable to bind to chromatin at direct target genes whereas the unphosphorylated form can shuttle from cytoplasm to nucleus. Expressed in hypocotyl cells of etiolated plants.

The protein resides in the nucleus. Its subcellular location is the cytoplasm. In terms of biological role, key regulator of far red / red (FR/R) spectrum-specific responses essential for the adaption to changing light conditions (e.g. de-etiolation), essentially by regulating PHYA shuttling from the cytoplasm to the nucleus and by directly regulating the expression of some target genes, depending on light conditions and phosphorylation status. Binds chromatin at target genes promoters, especially in FR light conditions. Can activate transcription of different genes, some being in a phytochrome A (PHYA)-dependent and other in a PHYA-independent manners. Controls specific aspects of plant development, such as the inhibition of seed germination under FR during salt stress. Essential for light-regulated PHYA nuclear accumulation and subsequent PHYA phototropic signaling processes involved in photomorphogenesis. Mediates the association of PHYA with HFR1 and LAF1 in the nucleus in response to FR conditions. PHYA-specific signal transducer in response to continuous FR lights. Contributes to inhibition of hypocotyl elongation in continuous blue light (B). This chain is Protein FAR-RED ELONGATED HYPOCOTYL 1, found in Arabidopsis thaliana (Mouse-ear cress).